Here is a 41-residue protein sequence, read N- to C-terminus: Large ribosomal subunit protein bL36 (41 aa).

Belongs to the bacterial ribosomal protein bL36 family.

The sequence is that of Large ribosomal subunit protein bL36 from Cereibacter sphaeroides (strain ATCC 17029 / ATH 2.4.9) (Rhodobacter sphaeroides).